Reading from the N-terminus, the 698-residue chain is Macrophomene synthase (698 aa).

Residues 21–340 (MEYMYSVPLD…SCDRYSSYRR (320 aa)) are terpene cyclase. Position 113 (D113) interacts with Mg(2+). A DDXXD 1 motif is present at residues 113–117 (DNIAE). The NSE/DTE signature appears at 242 to 250 (NDFFSFNYE). The tract at residues 341 to 696 (EKHQMELPIR…IQLALERLRI (356 aa)) is prenyltransferase. Positions 368 to 387 (LPNGKQLDAPTESSGKDLSD) are disordered. Isopentenyl diphosphate contacts are provided by K417, R420, and H449. Positions 456 and 460 each coordinate Mg(2+). A DDXXD 2 motif is present at residues 456-460 (DDIED). R465 serves as a coordination point for dimethylallyl diphosphate. Residue R466 coordinates isopentenyl diphosphate. Positions 543, 544, 579, 586, 596, and 606 each coordinate dimethylallyl diphosphate.

The protein in the N-terminal section; belongs to the terpene synthase family. This sequence in the C-terminal section; belongs to the FPP/GGPP synthase family. As to quaternary structure, hexamer. Mg(2+) is required as a cofactor.

It carries out the reaction 5 isopentenyl diphosphate + dimethylallyl diphosphate = all-trans-hexaprenyl diphosphate + 5 diphosphate. It catalyses the reaction all-trans-hexaprenyl diphosphate = macrophomene + diphosphate. Bifunctional terpene synthase that converts dimethylallyl diphosphate (DMAPP) and isopentenyl diphosphate (IPP) into macrophomene as a single product. The C-terminal prenyltransferase (PT) domain of MpMS catalyzes formation of hexaprenyl diphosphate (HexPP), whereas the N-terminal terpene cyclase (TC) domain catalyzes the cyclization of HexPP to macrophomene. The protein is Macrophomene synthase of Macrophomina phaseolina (strain MS6) (Charcoal rot fungus).